The following is a 116-amino-acid chain: G antigen 2D (116 aa).

Residues 1-116 (MSWRGRSTYR…PEEGEKQSQC (116 aa)) are disordered. 2 stretches are compositionally biased toward acidic residues: residues 31–44 (FSDE…EEGE) and 86–95 (ECEDGPDGQE). The segment covering 102 to 116 (EEVKTPEEGEKQSQC) has biased composition (basic and acidic residues).

This sequence belongs to the GAGE family. In terms of tissue distribution, not expressed in normal tissues, except in testis, but expressed by a large proportion of tumors of various histological origins.

The polypeptide is G antigen 2D (GAGE2D) (Homo sapiens (Human)).